The chain runs to 187 residues: Protein GrpE (187 aa).

Basic and acidic residues predominate over residues 1–11; that stretch reads MTDSSNEHETE. Residues 1 to 21 form a disordered region; the sequence is MTDSSNEHETENPSLPIPDNE.

It belongs to the GrpE family. In terms of assembly, homodimer.

Its subcellular location is the cytoplasm. Its function is as follows. Participates actively in the response to hyperosmotic and heat shock by preventing the aggregation of stress-denatured proteins, in association with DnaK and GrpE. It is the nucleotide exchange factor for DnaK and may function as a thermosensor. Unfolded proteins bind initially to DnaJ; upon interaction with the DnaJ-bound protein, DnaK hydrolyzes its bound ATP, resulting in the formation of a stable complex. GrpE releases ADP from DnaK; ATP binding to DnaK triggers the release of the substrate protein, thus completing the reaction cycle. Several rounds of ATP-dependent interactions between DnaJ, DnaK and GrpE are required for fully efficient folding. This is Protein GrpE from Chlamydia caviae (strain ATCC VR-813 / DSM 19441 / 03DC25 / GPIC) (Chlamydophila caviae).